The sequence spans 1115 residues: Ubiquitin C-terminal hydrolase 13 (1115 aa).

Residues 1-51 (MTMMTPPPLDQQEDEEMLVPNPDLVEGPQPMEVAQTDPAATAVENPPPEDP) are disordered. The region spanning 53 to 178 (SLKFTWTIPM…NDTVLIEAEV (126 aa)) is the MATH domain. Residues 198 to 522 (VGLKNQGATC…NAYMLVYIRE (325 aa)) form the USP domain. C207 serves as the catalytic Nucleophile. The active-site Proton acceptor is the H454.

This sequence belongs to the peptidase C19 family. Interacts with SIC/RON3. Interacts with RGI1 and RGI2.

It carries out the reaction Thiol-dependent hydrolysis of ester, thioester, amide, peptide and isopeptide bonds formed by the C-terminal Gly of ubiquitin (a 76-residue protein attached to proteins as an intracellular targeting signal).. Its function is as follows. Recognizes and hydrolyzes the peptide bond at the C-terminal Gly of ubiquitin. Involved in the processing of poly-ubiquitin precursors as well as that of ubiquitinated proteins. Positive regulator of root meristem development that, together with UBP12, prevents the ubiquitination and turnover of RGFR1 induced by the RGF1 hormone peptide, thus influencing PLT1 and PLT2 expression. This Arabidopsis thaliana (Mouse-ear cress) protein is Ubiquitin C-terminal hydrolase 13.